The primary structure comprises 1284 residues: A-type inclusion protein A25 homolog (1284 aa).

The interval 340 to 383 (KPITNTGIEEPHATGGDKEEQEQQPVKVVQSKPDDGITPYNPFE) is disordered. The segment covering 348–357 (EEPHATGGDK) has biased composition (basic and acidic residues). Repeat copies occupy residues 611 to 637 (VRRE…RNQE), 638 to 665 (DTQE…SGGG), 666 to 689 (NLTE…ECRG), 690 to 720 (NATE…NNAD), 721 to 751 (TERE…SNAD), 752 to 780 (MERE…GNGT), 781 to 811 (SSEE…ELYS), 812 to 842 (AYKS…KTDS), 843 to 871 (YYRR…TNHA), and 872 to 912 (KYID…REIE). The segment at 611–912 (VRRELEEERR…DMDQYKREIE (302 aa)) is 10 X approximate tandem repeats. The disordered stretch occupies residues 1169 to 1234 (PLTTEDTEPK…PPKPETPQIS (66 aa)). Over residues 1180–1192 (VEVVPPSSDVTEP) the composition is skewed to low complexity. Residues 1211–1221 (SEYQTSVSQVA) show a composition bias toward polar residues.

The protein belongs to the poxviridae A25 protein family. As to quaternary structure, interacts (via N-terminus) with protein A26.

Its subcellular location is the virion. In terms of biological role, structural protein that forms a matrix surrounding the mature virion (MV) through interaction with protein A26. Presence of protein A25 in the virion structurally prevents direct virus-cell fusion mechanism. The sequence is that of A-type inclusion protein A25 homolog (ATI) from Apodemus sylvaticus (European woodmouse).